The chain runs to 188 residues: HGPRTase-like protein 1 (188 aa).

Belongs to the purine/pyrimidine phosphoribosyltransferase family. Archaeal HPRT subfamily.

In terms of biological role, may catalyze a purine salvage reaction, the substrate is unknown. In Haloquadratum walsbyi (strain DSM 16854 / JCM 12705 / C23), this protein is HGPRTase-like protein 1.